Reading from the N-terminus, the 703-residue chain is Harmonin-binding protein USHBP1 (703 aa).

The span at 1–15 (MSARATRPRSRRGRH) shows a compositional bias: basic residues. Disordered regions lie at residues 1-113 (MSAR…PPGN) and 138-172 (HQPPSHSGPMEFEGTSEGGAGSLGKQEGAGSCQRE). The stretch at 189–227 (SREDELVRTQASLEAIRAEKETLQKEVQELQDSLLRLEP) forms a coiled coil. The disordered stretch occupies residues 228–256 (CPHLSHNQAGGSGSGSSSSEADREPWETQ). A coiled-coil region spans residues 289 to 309 (EMHIMEAQMEQLRGSIEKLKC). The disordered stretch occupies residues 396 to 416 (MDAGAQQNPQPSPEGSSVDKP). Over residues 400-410 (AQQNPQPSPEG) the composition is skewed to polar residues. A coiled-coil region spans residues 476–513 (RLEKTQIQQDLVAAREALADLMLRLQLVRREKRGLELR). Residues 540–583 (AGGANSSGGHSSGGGSSGDEEEWYQGLPAVPGGTSGIDGGQVGR) are disordered. Gly residues predominate over residues 572–581 (GTSGIDGGQV). A coiled-coil region spans residues 596 to 681 (ASLTRTLDLQ…QAEEVAVLEA (86 aa)).

Belongs to the MCC family. As to quaternary structure, interacts via its C-terminus with the first PDZ domain of USH1C. Highest level of expression in heart, and moderate to low expression in skeletal muscle, kidney, liver, small intestine, placenta and lung.

The chain is Harmonin-binding protein USHBP1 from Homo sapiens (Human).